We begin with the raw amino-acid sequence, 823 residues long: Protein phosphatase 1 regulatory subunit 29 (823 aa).

The signal sequence occupies residues 1-22 (MLRLGLCAAALLCVCQPGAVRA). At 23–397 (DCWLIEGDKG…APSTSTTTHY (375 aa)) the chain is on the extracellular side. Asparagine 54 is a glycosylation site (N-linked (GlcNAc...) asparagine). LRR repeat units lie at residues 56–77 (TVHDLRLNENKLKAVLYSSLNR), 80–101 (NLTDLNLTKNEISYIEDGAFLG), 104–125 (SLQVLQLGYNRLSNLTEGMLRG), 128–149 (RLQFLFVQHNLIEVVTPTAFSE), and 152–173 (SLISIDLSSNRLSRLDGATFAS). Asparagine 80, asparagine 85, and asparagine 117 each carry an N-linked (GlcNAc...) asparagine glycan. The LRRCT domain maps to 185-247 (NPFNCECDLF…ITVLQAKCRN (63 aa)). Residues asparagine 205 and asparagine 247 are each glycosylated (N-linked (GlcNAc...) asparagine). Residues 249 to 294 (SMPARPVSHPTPYSTDAQREPDENSGFNPDEILSVEPPASSTTDAS) are disordered. Residues 292-379 (DASAGPAIKL…FNHTCLTFTT (88 aa)) form the Fibronectin type-III domain. The chain crosses the membrane as a helical span at residues 398–418 (IMTILGCLFGMVIVLGAVYYC). Topologically, residues 419–823 (LRKRRMQEEK…WKGVSAQQKL (405 aa)) are cytoplasmic. The disordered stretch occupies residues 590–624 (ASSAATPGALERPSFLSPPYKESSHHPLQRQLSAD). Phosphoserine is present on residues serine 622, serine 671, and serine 675.

As to quaternary structure, interacts with PPP1CA.

Its subcellular location is the membrane. Its function is as follows. Inhibits phosphatase activity of protein phosphatase 1 (PP1) complexes. In Mus musculus (Mouse), this protein is Protein phosphatase 1 regulatory subunit 29 (Elfn2).